Reading from the N-terminus, the 282-residue chain is Acetylglutamate kinase (282 aa).

Substrate contacts are provided by residues Gly62–Gly63, Arg84, and Asn178.

The protein belongs to the acetylglutamate kinase family. ArgB subfamily.

Its subcellular location is the cytoplasm. The enzyme catalyses N-acetyl-L-glutamate + ATP = N-acetyl-L-glutamyl 5-phosphate + ADP. Its pathway is amino-acid biosynthesis; L-arginine biosynthesis; N(2)-acetyl-L-ornithine from L-glutamate: step 2/4. Functionally, catalyzes the ATP-dependent phosphorylation of N-acetyl-L-glutamate. The protein is Acetylglutamate kinase of Thermotoga petrophila (strain ATCC BAA-488 / DSM 13995 / JCM 10881 / RKU-1).